The sequence spans 446 residues: Fatty acid desaturase 2 (446 aa).

Residues 1–132 (MGMGGQSGEG…EDMRLFKSNP (132 aa)) are Cytoplasmic-facing. The region spanning 20–97 (EAQYSWEEIQ…LKPLYIGELA (78 aa)) is the Cytochrome b5 heme-binding domain. The helical transmembrane segment at 133–153 (AFFIFYLFHILLIEFLAWCTL) threads the bilayer. Residue His154 is a topological domain, lumenal. The helical transmembrane segment at 155 to 175 (YLGTGWIPAIITVLLLTISQA) threads the bilayer. Residues 176–265 (QAGWLQHDFG…IKYLPYNHQH (90 aa)) are Cytoplasmic-facing. The Histidine box-1 signature appears at 182-186 (HDFGH). The Histidine box-2 motif lies at 219–223 (HFQHH). Residues 266–286 (LYFFLIGPPLLIPVYFTVQII) traverse the membrane as a helical segment. Residues 287-307 (KTMIARKDWVDLAWSVSYYVR) lie on the Lumenal side of the membrane. A helical transmembrane segment spans residues 308–328 (FFFTFVPFFGVLGSLALLNAV). Residues 329–446 (RFFESHWFVW…QLWLDAYLHK (118 aa)) lie on the Cytoplasmic side of the membrane. The Histidine box-3 motif lies at 384 to 388 (QIEHH).

This sequence belongs to the fatty acid desaturase type 1 family.

It is found in the endoplasmic reticulum membrane. It participates in lipid metabolism; polyunsaturated fatty acid biosynthesis. Its function is as follows. Component of a lipid metabolic pathway that catalyzes biosynthesis of highly unsaturated fatty acids (HUFA) from precursor essential polyunsaturated fatty acids (PUFA) linoleic acid (LA) (18:2n-6) and alpha-linolenic acid (ALA) (18:3n-3). Catalyzes the first and rate limiting step in this pathway which is the desaturation of LA (18:2n-6) and ALA (18:3n-3) into gamma-linoleic acid (GLA) (18:3n-6) and stearidonic acid (18:4n-3) respectively and other desaturation steps. Highly unsaturated fatty acids (HUFA) play pivotal roles in many biological functions. The protein is Fatty acid desaturase 2 (fads2) of Xenopus laevis (African clawed frog).